The chain runs to 201 residues: Recombination protein RecR (201 aa).

The C4-type zinc finger occupies 57–72 (CKYCANFTNKDECDIC). Residues 80–176 (TKLMIVTTNE…QIYRIGFGIP (97 aa)) form the Toprim domain.

The protein belongs to the RecR family.

Its function is as follows. May play a role in DNA repair. It seems to be involved in an RecBC-independent recombinational process of DNA repair. It may act with RecF and RecO. In Ureaplasma parvum serovar 3 (strain ATCC 27815 / 27 / NCTC 11736), this protein is Recombination protein RecR.